A 276-amino-acid polypeptide reads, in one-letter code: Bis(5'-nucleosyl)-tetraphosphatase, symmetrical (276 aa).

The protein belongs to the Ap4A hydrolase family.

The enzyme catalyses P(1),P(4)-bis(5'-adenosyl) tetraphosphate + H2O = 2 ADP + 2 H(+). In terms of biological role, hydrolyzes diadenosine 5',5'''-P1,P4-tetraphosphate to yield ADP. This is Bis(5'-nucleosyl)-tetraphosphatase, symmetrical from Legionella pneumophila (strain Corby).